The sequence spans 346 residues: Holliday junction branch migration complex subunit RuvB (346 aa).

The large ATPase domain (RuvB-L) stretch occupies residues 4–185 (SDRIITASPF…FGIVSRLEFY (182 aa)). Residues leucine 24, arginine 25, glycine 66, lysine 69, threonine 70, threonine 71, 132 to 134 (EDY), arginine 175, tyrosine 185, and arginine 222 contribute to the ATP site. Threonine 70 provides a ligand contact to Mg(2+). Residues 186–256 (TSDELSKIVT…VADAALQMLD (71 aa)) are small ATPAse domain (RuvB-S). Positions 259–346 (AAGLDVLDRK…AATPGLFNPD (88 aa)) are head domain (RuvB-H). DNA is bound by residues arginine 295, arginine 314, and arginine 319.

The protein belongs to the RuvB family. In terms of assembly, homohexamer. Forms an RuvA(8)-RuvB(12)-Holliday junction (HJ) complex. HJ DNA is sandwiched between 2 RuvA tetramers; dsDNA enters through RuvA and exits via RuvB. An RuvB hexamer assembles on each DNA strand where it exits the tetramer. Each RuvB hexamer is contacted by two RuvA subunits (via domain III) on 2 adjacent RuvB subunits; this complex drives branch migration. In the full resolvosome a probable DNA-RuvA(4)-RuvB(12)-RuvC(2) complex forms which resolves the HJ.

It localises to the cytoplasm. It carries out the reaction ATP + H2O = ADP + phosphate + H(+). The RuvA-RuvB-RuvC complex processes Holliday junction (HJ) DNA during genetic recombination and DNA repair, while the RuvA-RuvB complex plays an important role in the rescue of blocked DNA replication forks via replication fork reversal (RFR). RuvA specifically binds to HJ cruciform DNA, conferring on it an open structure. The RuvB hexamer acts as an ATP-dependent pump, pulling dsDNA into and through the RuvAB complex. RuvB forms 2 homohexamers on either side of HJ DNA bound by 1 or 2 RuvA tetramers; 4 subunits per hexamer contact DNA at a time. Coordinated motions by a converter formed by DNA-disengaged RuvB subunits stimulates ATP hydrolysis and nucleotide exchange. Immobilization of the converter enables RuvB to convert the ATP-contained energy into a lever motion, pulling 2 nucleotides of DNA out of the RuvA tetramer per ATP hydrolyzed, thus driving DNA branch migration. The RuvB motors rotate together with the DNA substrate, which together with the progressing nucleotide cycle form the mechanistic basis for DNA recombination by continuous HJ branch migration. Branch migration allows RuvC to scan DNA until it finds its consensus sequence, where it cleaves and resolves cruciform DNA. This chain is Holliday junction branch migration complex subunit RuvB, found in Nitrosomonas eutropha (strain DSM 101675 / C91 / Nm57).